The sequence spans 332 residues: Ribosomal RNA small subunit methyltransferase C (332 aa).

The protein belongs to the methyltransferase superfamily. RsmC family. Monomer.

It is found in the cytoplasm. The catalysed reaction is guanosine(1207) in 16S rRNA + S-adenosyl-L-methionine = N(2)-methylguanosine(1207) in 16S rRNA + S-adenosyl-L-homocysteine + H(+). Its function is as follows. Specifically methylates the guanine in position 1207 of 16S rRNA in the 30S particle. This is Ribosomal RNA small subunit methyltransferase C from Pseudomonas fluorescens (strain ATCC BAA-477 / NRRL B-23932 / Pf-5).